Reading from the N-terminus, the 392-residue chain is DNA-directed RNA polymerase subunit Rpo1C (392 aa).

Belongs to the RNA polymerase beta' chain family. As to quaternary structure, part of the RNA polymerase complex.

Its subcellular location is the cytoplasm. The catalysed reaction is RNA(n) + a ribonucleoside 5'-triphosphate = RNA(n+1) + diphosphate. DNA-dependent RNA polymerase (RNAP) catalyzes the transcription of DNA into RNA using the four ribonucleoside triphosphates as substrates. Forms part of the jaw domain. The protein is DNA-directed RNA polymerase subunit Rpo1C of Saccharolobus islandicus (strain Y.N.15.51 / Yellowstone #2) (Sulfolobus islandicus).